The sequence spans 406 residues: Kelch domain-containing protein 1 (406 aa).

6 Kelch repeats span residues 24 to 76 (FLYV…CGAC), 80 to 134 (KLYI…VYKD), 135 to 181 (RLIY…TKTQ), 208 to 258 (KGYI…PIAD), 260 to 307 (KLFL…ACLG), and 311 to 361 (EIMV…LESQ).

In terms of assembly, component of a CRL5 E3 ubiquitin-protein ligase complex, also named ECS (Elongin BC-CUL2/5-SOCS-box protein) complex, composed of CUL5, Elongin BC (ELOB and ELOC), RBX1 and substrate-specific adapter KLHDC1. Widely expressed, with high levels in skeletal muscle, pancreas and liver. Undetectable in peripheral blood leukocytes.

The protein localises to the cytoplasm. Its subcellular location is the cytosol. It functions in the pathway protein modification; protein ubiquitination. In terms of biological role, substrate-recognition component of a Cul5-RING (CRL5) E3 ubiquitin-protein ligase complex of the DesCEND (destruction via C-end degrons) pathway, which recognizes a C-degron located at the extreme C terminus of target proteins, leading to their ubiquitination and degradation. The C-degron recognized by the DesCEND pathway is usually a motif of less than ten residues and can be present in full-length proteins, truncated proteins or proteolytically cleaved forms. The CRL5(KLHDC1) complex mediates ubiquitination and degradation of truncated SELENOS selenoprotein produced by failed UGA/Sec decoding, which ends with a glycine. This is Kelch domain-containing protein 1 from Homo sapiens (Human).